An 886-amino-acid polypeptide reads, in one-letter code: DNA double-strand break repair Rad50 ATPase (886 aa).

ATP contacts are provided by residues 32-38 (NGAGKSS) and Gln-137. Coiled coils occupy residues 181–240 (IRSL…KEIK) and 320–416 (RKKE…GDLN). The Zinc-hook domain maps to 391–489 (IKDVSDRINQ…EREELEATRN (99 aa)). Positions 437 and 440 each coordinate Zn(2+). Coiled coils occupy residues 450–657 (AKIR…ISEL) and 682–718 (EADKGKIKGSLEEKIKNIEEKERNIEELRNKMNEESK).

This sequence belongs to the SMC family. RAD50 subfamily. In terms of assembly, homodimer. Forms a heterotetramer composed of two Mre11 subunits and two Rad50 subunits. Interacts with Mre11 and HerA. Zn(2+) is required as a cofactor.

Part of the Rad50/Mre11 complex, which is involved in the early steps of DNA double-strand break (DSB) repair. The complex may facilitate opening of the processed DNA ends to aid in the recruitment of HerA and NurA. Rad50 controls the balance between DNA end bridging and DNA resection via ATP-dependent structural rearrangements of the Rad50/Mre11 complex. In Sulfolobus acidocaldarius (strain ATCC 33909 / DSM 639 / JCM 8929 / NBRC 15157 / NCIMB 11770), this protein is DNA double-strand break repair Rad50 ATPase.